The sequence spans 540 residues: Cytochrome P450 monooxygenase prx8 (540 aa).

Residues 50 to 68 traverse the membrane as a helical segment; it reads ALGAAIALFACACAYALVA. The N-linked (GlcNAc...) asparagine glycan is linked to Asn460. A heme-binding site is contributed by Cys483.

This sequence belongs to the cytochrome P450 family. Heme is required as a cofactor.

Its subcellular location is the membrane. The protein operates within sesquiterpene biosynthesis. In terms of biological role, cytochrome P450 monooxygenase; part of the gene cluster that mediates the biosynthesis of PR-toxin, a bicyclic sesquiterpene belonging to the eremophilane class and acting as a mycotoxin. The first step of the pathway is catalyzed by the aristolochene synthase which performs the cyclization of trans,trans-farnesyl diphosphate (FPP) to the bicyclic sesquiterpene aristolochene. Following the formation of aristolochene, the non-oxygenated aristolochene is converted to the trioxygenated intermediate eremofortin B, via 7-epi-neopetasone. This conversion appears to involve three enzymes, a hydroxysterol oxidase-like enzyme, the quinone-oxidase prx3 that forms the quinone-type-structure in the bicyclic nucleus of aristolochene with the C8-oxo group and the C-3 hydroxyl group, and the P450 monooxygenase prx9 that introduces the epoxide at the double bond between carbons 1 and 2. No monoxy or dioxy-intermediates have been reported to be released to the broth, so these three early oxidative reactions may be coupled together. Eremofortin B is further oxidized by another P450 monooxygenase, that introduces a second epoxide between carbons 7 and 11 prior to acetylation to eremofortin A by the acetyltransferase prx11. The second epoxidation may be performed by a second P450 monooxygenase. After the acetylation step, eremofortin A is converted to eremofortin C and then to PR-toxin. First the conversion of eremofortin A to eremofortin C proceeds by oxidation of the side chain of the molecule at C-12 and is catalyzed by the short-chain oxidoreductase prx1. The cytochrome P450 monooxygenase prx8 also plays a role in this step. The primary alcohol formed at C-12 is finally oxidized by the short-chain alcohol dehydrogenase prx4 that forms PR-toxin. This Penicillium rubens (strain ATCC 28089 / DSM 1075 / NRRL 1951 / Wisconsin 54-1255) (Penicillium chrysogenum) protein is Cytochrome P450 monooxygenase prx8.